Here is a 577-residue protein sequence, read N- to C-terminus: CTP synthase (577 aa).

The interval 1-268 (MDPAFIFITG…GALLCERLRL (268 aa)) is amidoligase domain. A CTP-binding site is contributed by Ser14. UTP is bound at residue Ser14. Position 15-20 (15-20 (SLGKGI)) interacts with ATP. Residue Tyr55 coordinates L-glutamine. Asp72 is an ATP binding site. Mg(2+) contacts are provided by Asp72 and Glu142. CTP-binding positions include 149-151 (DIE), 189-194 (KTKPLQ), and Lys225. UTP contacts are provided by residues 189–194 (KTKPLQ) and Lys225. A Glutamine amidotransferase type-1 domain is found at 333-575 (TVALVGKYVS…VAAGLERKDS (243 aa)). Gly396 provides a ligand contact to L-glutamine. The active-site Nucleophile; for glutamine hydrolysis is Cys423. L-glutamine is bound by residues 424-427 (LGMQ), Glu447, and Arg503. Active-site residues include His548 and Glu550.

Belongs to the CTP synthase family. As to quaternary structure, homotetramer.

It catalyses the reaction UTP + L-glutamine + ATP + H2O = CTP + L-glutamate + ADP + phosphate + 2 H(+). The enzyme catalyses L-glutamine + H2O = L-glutamate + NH4(+). The catalysed reaction is UTP + NH4(+) + ATP = CTP + ADP + phosphate + 2 H(+). The protein operates within pyrimidine metabolism; CTP biosynthesis via de novo pathway; CTP from UDP: step 2/2. Its activity is regulated as follows. Allosterically activated by GTP, when glutamine is the substrate; GTP has no effect on the reaction when ammonia is the substrate. The allosteric effector GTP functions by stabilizing the protein conformation that binds the tetrahedral intermediate(s) formed during glutamine hydrolysis. Inhibited by the product CTP, via allosteric rather than competitive inhibition. Functionally, catalyzes the ATP-dependent amination of UTP to CTP with either L-glutamine or ammonia as the source of nitrogen. Regulates intracellular CTP levels through interactions with the four ribonucleotide triphosphates. The chain is CTP synthase from Treponema pallidum (strain Nichols).